Here is a 175-residue protein sequence, read N- to C-terminus: Ribosome maturation factor RimM (175 aa).

The PRC barrel domain occupies 100–174; sequence EDEYYWNDVI…VKHKIITVIW (75 aa).

Belongs to the RimM family. In terms of assembly, binds ribosomal protein uS19.

It localises to the cytoplasm. Its function is as follows. An accessory protein needed during the final step in the assembly of 30S ribosomal subunit, possibly for assembly of the head region. Essential for efficient processing of 16S rRNA. May be needed both before and after RbfA during the maturation of 16S rRNA. It has affinity for free ribosomal 30S subunits but not for 70S ribosomes. This chain is Ribosome maturation factor RimM, found in Buchnera aphidicola subsp. Schizaphis graminum (strain Sg).